A 445-amino-acid polypeptide reads, in one-letter code: tRNA(Ile)-lysidine synthase (445 aa).

19–24 serves as a coordination point for ATP; that stretch reads SGGIDS.

It belongs to the tRNA(Ile)-lysidine synthase family.

It localises to the cytoplasm. It catalyses the reaction cytidine(34) in tRNA(Ile2) + L-lysine + ATP = lysidine(34) in tRNA(Ile2) + AMP + diphosphate + H(+). Ligates lysine onto the cytidine present at position 34 of the AUA codon-specific tRNA(Ile) that contains the anticodon CAU, in an ATP-dependent manner. Cytidine is converted to lysidine, thus changing the amino acid specificity of the tRNA from methionine to isoleucine. The polypeptide is tRNA(Ile)-lysidine synthase (Buchnera aphidicola subsp. Schizaphis graminum (strain Sg)).